Reading from the N-terminus, the 408-residue chain is Secreted effector protein SseJ (408 aa).

Serine 151 (nucleophile) is an active-site residue. Catalysis depends on residues aspartate 381 and histidine 384.

The protein belongs to the 'GDSL' lipolytic enzyme family. In terms of assembly, interacts with RhoA and indirectly with SifA.

The protein localises to the secreted. Its subcellular location is the host cytoplasm. Effector proteins function to alter host cell physiology and promote bacterial survival in host tissues. This protein is required for endosomal tubulation and negatively regulates the formation of Salmonella-induced filaments (Sifs) in epithelial cells. Has both deacylase and esterification activities in vitro, but esterification is probably the dominant activity in host cells. Significantly contributes to cholesterol esterification, which reduces cellular cholesterol in cells and abrogates the ability of SifA to associate with cholesterol and LAMP-1 vesicles. In Salmonella typhimurium (strain LT2 / SGSC1412 / ATCC 700720), this protein is Secreted effector protein SseJ (sseJ).